The primary structure comprises 176 residues: Small ribosomal subunit protein uS5 (176 aa).

Residues 11–74 (LSEVLVDVNR…QAAKKKMMKV (64 aa)) enclose the S5 DRBM domain.

This sequence belongs to the universal ribosomal protein uS5 family. Part of the 30S ribosomal subunit. Contacts proteins S4 and S8.

With S4 and S12 plays an important role in translational accuracy. Functionally, located at the back of the 30S subunit body where it stabilizes the conformation of the head with respect to the body. This chain is Small ribosomal subunit protein uS5, found in Rickettsia bellii (strain RML369-C).